Reading from the N-terminus, the 598-residue chain is Dihydroxy-acid dehydratase, mitochondrial (598 aa).

A mitochondrion-targeting transit peptide spans 1–18 (MMFCKLLRCQNGIASKRA). A [2Fe-2S] cluster-binding site is contributed by cysteine 84. Aspartate 116 contributes to the Mg(2+) binding site. Cysteine 157 is a [2Fe-2S] cluster binding site. Aspartate 158 contributes to the Mg(2+) binding site. Position 232 (cysteine 232) interacts with [2Fe-2S] cluster. Residue glutamate 485 coordinates Mg(2+). Serine 511 acts as the Proton acceptor in catalysis.

The protein belongs to the IlvD/Edd family. Requires [2Fe-2S] cluster as cofactor. Mg(2+) is required as a cofactor.

It localises to the mitochondrion. The catalysed reaction is (2R)-2,3-dihydroxy-3-methylbutanoate = 3-methyl-2-oxobutanoate + H2O. It catalyses the reaction (2R,3R)-2,3-dihydroxy-3-methylpentanoate = (S)-3-methyl-2-oxopentanoate + H2O. Its pathway is amino-acid biosynthesis; L-isoleucine biosynthesis; L-isoleucine from 2-oxobutanoate: step 3/4. The protein operates within amino-acid biosynthesis; L-valine biosynthesis; L-valine from pyruvate: step 3/4. In terms of biological role, dihydroxyacid dehydratase that catalyzes the third step in the common pathway leading to biosynthesis of branched-chain amino acids. Catalyzes the dehydration of (2R,3R)-2,3-dihydroxy-3-methylpentanoate (2,3-dihydroxy-3-methylvalerate) into 2-oxo-3-methylpentanoate (2-oxo-3-methylvalerate) and of (2R)-2,3-dihydroxy-3-methylbutanoate (2,3-dihydroxyisovalerate) into 2-oxo-3-methylbutanoate (2-oxoisovalerate), the penultimate precursor to L-isoleucine and L-valine, respectively. This chain is Dihydroxy-acid dehydratase, mitochondrial, found in Schizosaccharomyces pombe (strain 972 / ATCC 24843) (Fission yeast).